The primary structure comprises 65 residues: Large ribosomal subunit protein bL35 (65 aa).

It belongs to the bacterial ribosomal protein bL35 family.

In Stenotrophomonas maltophilia (strain R551-3), this protein is Large ribosomal subunit protein bL35.